The chain runs to 427 residues: 3-phosphoshikimate 1-carboxyvinyltransferase (427 aa).

Lys-23, Ser-24, and Arg-28 together coordinate 3-phosphoshikimate. Lys-23 is a phosphoenolpyruvate binding site. 2 residues coordinate phosphoenolpyruvate: Gly-97 and Arg-125. Positions 169, 170, 171, 197, 313, 336, and 340 each coordinate 3-phosphoshikimate. Gln-171 serves as a coordination point for phosphoenolpyruvate. Asp-313 functions as the Proton acceptor in the catalytic mechanism. Phosphoenolpyruvate contacts are provided by Arg-344, Arg-386, and Lys-411.

Belongs to the EPSP synthase family. Monomer.

It localises to the cytoplasm. It catalyses the reaction 3-phosphoshikimate + phosphoenolpyruvate = 5-O-(1-carboxyvinyl)-3-phosphoshikimate + phosphate. It functions in the pathway metabolic intermediate biosynthesis; chorismate biosynthesis; chorismate from D-erythrose 4-phosphate and phosphoenolpyruvate: step 6/7. Catalyzes the transfer of the enolpyruvyl moiety of phosphoenolpyruvate (PEP) to the 5-hydroxyl of shikimate-3-phosphate (S3P) to produce enolpyruvyl shikimate-3-phosphate and inorganic phosphate. The sequence is that of 3-phosphoshikimate 1-carboxyvinyltransferase from Yersinia ruckeri.